An 877-amino-acid polypeptide reads, in one-letter code: Dynamin (877 aa).

The 267-residue stretch at 23–289 folds into the Dynamin-type G domain; sequence QLDLPQIAVV…LTNHIRDTLP (267 aa). Positions 33 to 40 are G1 motif; that stretch reads GGQSAGKS. 33-41 is a binding site for GTP; sequence GGQSAGKSS. The interval 59 to 61 is G2 motif; that stretch reads VTR. Residues 131 to 134 are G3 motif; sequence DLPG. The segment at 200-203 is G4 motif; that stretch reads TKLD. GTP-binding positions include 200–206 and 231–234; these read TKLDLMD and NRSQ. The tract at residues 230–233 is G5 motif; the sequence is VNRS. In terms of domain architecture, PH spans 513–621; it reads QVIRKGHMVI…WKASFLRAGV (109 aa). Disordered stretches follow at residues 623–648 and 740–834; these read PEKQETQENGDESASEESSSDPQLER and TVSS…SGAV. The segment covering 630–641 has biased composition (acidic residues); the sequence is ENGDESASEESS. Residues 650–741 form the GED domain; the sequence is VETIRNLVDS…IIGDVSMATV (92 aa). Phosphoserine is present on residues Ser756, Ser764, and Ser767. The segment covering 788-826 has biased composition (pro residues); sequence PPLPPSTGRPAPAIPNRPGGGAPPLPGGRPGGSLPPPML.

The protein belongs to the TRAFAC class dynamin-like GTPase superfamily. Dynamin/Fzo/YdjA family.

The protein localises to the cytoplasm. It localises to the cytoskeleton. It catalyses the reaction GTP + H2O = GDP + phosphate + H(+). In terms of biological role, microtubule-associated force-producing protein which is involved in the production of microtubule bundles and which is able to bind and hydrolyze GTP. Implicated in endocytic protein sorting. In Drosophila melanogaster (Fruit fly), this protein is Dynamin (shi).